Reading from the N-terminus, the 213-residue chain is ER lumen protein-retaining receptor erd-2.1 (213 aa).

Topologically, residues 1 to 2 (MN) are lumenal. The chain crosses the membrane as a helical span at residues 3–21 (LFRFTADVAHAIAIVVLLL). Topologically, residues 22-35 (KIWKSRSCEGISGR) are cytoplasmic. Residues 36–53 (SQLLFALVFVTRYLDLFT) form a helical membrane-spanning segment. The Lumenal portion of the chain corresponds to 54-61 (NFFSFYNT). Residues 62-80 (AMKIFYLVASFGTVYLMWA) form a helical membrane-spanning segment. Topologically, residues 81 to 96 (KFKATYDRNNDSFRIE) are cytoplasmic. A helical membrane pass occupies residues 97–110 (FLVIPSMILALLIN). Residues 111-117 (HEFIFME) are Lumenal-facing. Residues 118–137 (VMWTFSIYLEAVAIMPQLFM) traverse the membrane as a helical segment. Topologically, residues 138 to 149 (LSRTGNAETITA) are cytoplasmic. A helical membrane pass occupies residues 150–168 (HYLFALGSYRFLYILNWVY). At 169-178 (RYYTESFFDP) the chain is on the lumenal side. Residues 179–199 (ISVVAGIVQTVLYADFFYLYI) traverse the membrane as a helical segment. Over 200–213 (TRVIQSNRQFEMSA) the chain is Cytoplasmic.

The protein belongs to the ERD2 family.

Its subcellular location is the endoplasmic reticulum membrane. In terms of biological role, required for the retention of luminal endoplasmic reticulum proteins. Determines the specificity of the luminal ER protein retention system. Also required for normal vesicular traffic through the Golgi. In Caenorhabditis elegans, this protein is ER lumen protein-retaining receptor erd-2.1.